Consider the following 148-residue polypeptide: Snaclec convulxin subunit beta (148 aa).

The signal sequence occupies residues 1-23 (MGRFIFVSFGLLVVFLSLSGSEA). 3 cysteine pairs are disulfide-bonded: C27-C38, C55-C144, and C121-C136. Residues 34 to 148 (YDRYCYKVFK…TYSFVCKFEA (115 aa)) form the C-type lectin domain.

This sequence belongs to the snaclec family. In terms of assembly, tetramer of heterodimers of alpha and beta subunits (alphabeta)(4); disulfide-linked. In terms of tissue distribution, expressed by the venom gland.

It is found in the secreted. Functionally, snake venom lectin that activates platelets by binding to the platelet collagen receptor glycoprotein VI (GP6). The indirect activation of integrin alpha-IIb/beta-3 (ITGA2B/ITGB3) also induced by the toxin is upstream the cytoskeletal translocation of GPIb, FcRgamma (FCER1G) and 14-3-3zeta (YWHAZ). The polypeptide is Snaclec convulxin subunit beta (Crotalus durissus terrificus (South American rattlesnake)).